Consider the following 292-residue polypeptide: Ribosomal protein L11 methyltransferase (292 aa).

S-adenosyl-L-methionine contacts are provided by threonine 144, glycine 165, aspartate 187, and asparagine 229.

The protein belongs to the methyltransferase superfamily. PrmA family.

It localises to the cytoplasm. It catalyses the reaction L-lysyl-[protein] + 3 S-adenosyl-L-methionine = N(6),N(6),N(6)-trimethyl-L-lysyl-[protein] + 3 S-adenosyl-L-homocysteine + 3 H(+). Methylates ribosomal protein L11. The protein is Ribosomal protein L11 methyltransferase of Pseudomonas putida (strain ATCC 47054 / DSM 6125 / CFBP 8728 / NCIMB 11950 / KT2440).